The sequence spans 292 residues: Acetylglutamate kinase (292 aa).

Substrate-binding positions include 62 to 63 (GG), Arg-84, and Asn-188.

Belongs to the acetylglutamate kinase family. ArgB subfamily.

It localises to the cytoplasm. It catalyses the reaction N-acetyl-L-glutamate + ATP = N-acetyl-L-glutamyl 5-phosphate + ADP. It participates in amino-acid biosynthesis; L-arginine biosynthesis; N(2)-acetyl-L-ornithine from L-glutamate: step 2/4. Functionally, catalyzes the ATP-dependent phosphorylation of N-acetyl-L-glutamate. The protein is Acetylglutamate kinase of Methanosarcina mazei (strain ATCC BAA-159 / DSM 3647 / Goe1 / Go1 / JCM 11833 / OCM 88) (Methanosarcina frisia).